The following is a 220-amino-acid chain: Deoxyribose-phosphate aldolase 1 (220 aa).

The active-site Proton donor/acceptor is D89. K151 (schiff-base intermediate with acetaldehyde) is an active-site residue. K180 functions as the Proton donor/acceptor in the catalytic mechanism.

Belongs to the DeoC/FbaB aldolase family. DeoC type 1 subfamily.

The protein resides in the cytoplasm. The enzyme catalyses 2-deoxy-D-ribose 5-phosphate = D-glyceraldehyde 3-phosphate + acetaldehyde. The protein operates within carbohydrate degradation; 2-deoxy-D-ribose 1-phosphate degradation; D-glyceraldehyde 3-phosphate and acetaldehyde from 2-deoxy-alpha-D-ribose 1-phosphate: step 2/2. Its function is as follows. Catalyzes a reversible aldol reaction between acetaldehyde and D-glyceraldehyde 3-phosphate to generate 2-deoxy-D-ribose 5-phosphate. The chain is Deoxyribose-phosphate aldolase 1 from Staphylococcus aureus (strain bovine RF122 / ET3-1).